The primary structure comprises 133 residues: Ribosome-binding factor A (133 aa).

This sequence belongs to the RbfA family. As to quaternary structure, monomer. Binds 30S ribosomal subunits, but not 50S ribosomal subunits or 70S ribosomes.

It localises to the cytoplasm. One of several proteins that assist in the late maturation steps of the functional core of the 30S ribosomal subunit. Associates with free 30S ribosomal subunits (but not with 30S subunits that are part of 70S ribosomes or polysomes). Required for efficient processing of 16S rRNA. May interact with the 5'-terminal helix region of 16S rRNA. This chain is Ribosome-binding factor A, found in Yersinia enterocolitica.